We begin with the raw amino-acid sequence, 464 residues long: Cystathionine beta-lyase, chloroplastic (464 aa).

The N-terminal 55 residues, 1–55 (MTSSLSLHSSFVPSFADLSDRGLISKNSPTSVSISKVPTWEKKQISNRNSFKLNC), are a transit peptide targeting the chloroplast. Residues tyrosine 127, arginine 129, glycine 157, methionine 158, serine 275, and threonine 277 each contribute to the pyridoxal 5'-phosphate site. The residue at position 278 (lysine 278) is an N6-(pyridoxal phosphate)lysine.

This sequence belongs to the trans-sulfuration enzymes family. As to quaternary structure, forms homodimers. May form homotetramers from two homodimers. It depends on pyridoxal 5'-phosphate as a cofactor.

The protein resides in the plastid. It localises to the chloroplast. It catalyses the reaction L,L-cystathionine + H2O = L-homocysteine + pyruvate + NH4(+). The catalysed reaction is an S-substituted L-cysteine + H2O = a thiol + pyruvate + NH4(+). Its pathway is amino-acid biosynthesis; L-methionine biosynthesis via de novo pathway; L-homocysteine from L-cystathionine: step 1/1. Its function is as follows. Catalyzes the penultimate step in the de novo biosynthesis of methionine. Its role in methionine metabolism may affect plant development in different organs, probably by modifying plant auxin transport. Its cysteine desulfhydrase activity may be involved in hydrogen sulfur production using L-cysteine as a substrate. In Arabidopsis thaliana (Mouse-ear cress), this protein is Cystathionine beta-lyase, chloroplastic.